Consider the following 211-residue polypeptide: CASP-like protein 3A1 (211 aa).

The Cytoplasmic portion of the chain corresponds to 1 to 45; sequence MGSIGNGRSDSVVGIQMPPAGSKMVLEPEALQVTTSPVPRWPRLG. The chain crosses the membrane as a helical span at residues 46–66; it reads VVMVATRAVAMVMALLSMSLM. Topologically, residues 67–95 are extracellular; sequence VSSKQRGILTIFGIEIPLDANWSFSYSLQ. An N-linked (GlcNAc...) asparagine glycan is attached at asparagine 87. Residues 96–116 traverse the membrane as a helical segment; it reads FLVAMSTASAAYSLAQLLLIA. At 117–131 the chain is on the cytoplasmic side; that stretch reads HKAVKKSPIVPSRRH. The chain crosses the membrane as a helical span at residues 132–152; it reads AWLLFAGDQVFSLAMMSAGSA. The Extracellular portion of the chain corresponds to 153-186; it reads AAAVANLNRTGIRHTALPNFCKPLPRFCDLSAVS. Asparagine 160 carries N-linked (GlcNAc...) asparagine glycosylation. The chain crosses the membrane as a helical span at residues 187-207; the sequence is IACAFLSCVFLAASAVIDVIW. Residues 208 to 211 are Cytoplasmic-facing; it reads LSSP.

Belongs to the Casparian strip membrane proteins (CASP) family. As to quaternary structure, homodimer and heterodimers.

The protein localises to the cell membrane. In Sorghum bicolor (Sorghum), this protein is CASP-like protein 3A1.